Consider the following 403-residue polypeptide: MNTENPIEKPFRKTGDPVDLTSESPLHPRRKSRRIMVGPVPVGGGAPISVQSMTNTLTANVPATLQQIAELTAAGCDIVRVAVPSQDDADALPEICRKSPIPVIADIHFQSKYVFQAIDAGCAAVRVNPGNIRKFDEVGPDICKAATDAGISLRIGVNAGSLDKELYAKYGGPTPEALVASALKEAHMFEDVGFHDFKISVKHHDVITMVETYRLLASKGDWPLHLGVTEAGPAWQGTIKSCLAFGALLAEGIGDTIRVSLSAPPAEEVKVGCKLLEYMGLRPRKFDIISCPSCGRAQVDVIQLASAVTEGLKDVTAPIRVAVMGCIVNGPGEAREADLGVASGNGKGQIFIKGKVIKTVPEDQIVDTLLTIANDIAAQMEADGQVPVNSTGPVVVPIQHPGH.

Basic and acidic residues predominate over residues 1–16 (MNTENPIEKPFRKTGD). Positions 1-31 (MNTENPIEKPFRKTGDPVDLTSESPLHPRRK) are disordered. [4Fe-4S] cluster is bound by residues cysteine 291, cysteine 294, cysteine 326, and glutamate 333.

Belongs to the IspG family. [4Fe-4S] cluster is required as a cofactor.

The enzyme catalyses (2E)-4-hydroxy-3-methylbut-2-enyl diphosphate + oxidized [flavodoxin] + H2O + 2 H(+) = 2-C-methyl-D-erythritol 2,4-cyclic diphosphate + reduced [flavodoxin]. Its pathway is isoprenoid biosynthesis; isopentenyl diphosphate biosynthesis via DXP pathway; isopentenyl diphosphate from 1-deoxy-D-xylulose 5-phosphate: step 5/6. Converts 2C-methyl-D-erythritol 2,4-cyclodiphosphate (ME-2,4cPP) into 1-hydroxy-2-methyl-2-(E)-butenyl 4-diphosphate. The chain is 4-hydroxy-3-methylbut-2-en-1-yl diphosphate synthase (flavodoxin) from Bifidobacterium longum (strain NCC 2705).